The primary structure comprises 384 residues: Succinyl-diaminopimelate desuccinylase (384 aa).

Zn(2+) is bound at residue histidine 71. Aspartate 73 is a catalytic residue. Aspartate 104 is a Zn(2+) binding site. Glutamate 139 acts as the Proton acceptor in catalysis. Residues glutamate 140, glutamate 168, and histidine 357 each contribute to the Zn(2+) site.

This sequence belongs to the peptidase M20A family. DapE subfamily. In terms of assembly, homodimer. Requires Zn(2+) as cofactor. Co(2+) is required as a cofactor.

The catalysed reaction is N-succinyl-(2S,6S)-2,6-diaminopimelate + H2O = (2S,6S)-2,6-diaminopimelate + succinate. It participates in amino-acid biosynthesis; L-lysine biosynthesis via DAP pathway; LL-2,6-diaminopimelate from (S)-tetrahydrodipicolinate (succinylase route): step 3/3. Functionally, catalyzes the hydrolysis of N-succinyl-L,L-diaminopimelic acid (SDAP), forming succinate and LL-2,6-diaminopimelate (DAP), an intermediate involved in the bacterial biosynthesis of lysine and meso-diaminopimelic acid, an essential component of bacterial cell walls. The chain is Succinyl-diaminopimelate desuccinylase from Bradyrhizobium sp. (strain ORS 278).